Consider the following 859-residue polypeptide: Leucine--tRNA ligase (859 aa).

The 'HIGH' region motif lies at 42 to 52 (PYPSGRLHMGH). Positions 618–622 (KMSKS) match the 'KMSKS' region motif. K621 serves as a coordination point for ATP.

The protein belongs to the class-I aminoacyl-tRNA synthetase family.

Its subcellular location is the cytoplasm. It carries out the reaction tRNA(Leu) + L-leucine + ATP = L-leucyl-tRNA(Leu) + AMP + diphosphate. The sequence is that of Leucine--tRNA ligase from Shewanella woodyi (strain ATCC 51908 / MS32).